We begin with the raw amino-acid sequence, 463 residues long: ATP synthase subunit beta (463 aa).

152-159 (GGAGVGKT) serves as a coordination point for ATP.

Belongs to the ATPase alpha/beta chains family. In terms of assembly, F-type ATPases have 2 components, CF(1) - the catalytic core - and CF(0) - the membrane proton channel. CF(1) has five subunits: alpha(3), beta(3), gamma(1), delta(1), epsilon(1). CF(0) has three main subunits: a(1), b(2) and c(9-12). The alpha and beta chains form an alternating ring which encloses part of the gamma chain. CF(1) is attached to CF(0) by a central stalk formed by the gamma and epsilon chains, while a peripheral stalk is formed by the delta and b chains.

It localises to the cell membrane. It catalyses the reaction ATP + H2O + 4 H(+)(in) = ADP + phosphate + 5 H(+)(out). In terms of biological role, produces ATP from ADP in the presence of a proton gradient across the membrane. The catalytic sites are hosted primarily by the beta subunits. This Clostridium botulinum (strain Alaska E43 / Type E3) protein is ATP synthase subunit beta.